The sequence spans 486 residues: Galactose-1-phosphate uridylyltransferase (486 aa).

Belongs to the galactose-1-phosphate uridylyltransferase type 2 family.

Its subcellular location is the cytoplasm. It carries out the reaction alpha-D-galactose 1-phosphate + UDP-alpha-D-glucose = alpha-D-glucose 1-phosphate + UDP-alpha-D-galactose. The protein operates within carbohydrate metabolism; galactose metabolism. This chain is Galactose-1-phosphate uridylyltransferase, found in Lacticaseibacillus casei (Lactobacillus casei).